The chain runs to 988 residues: Voltage-gated delayed rectifier potassium channel KCNH5 (988 aa).

At 1 to 217 the chain is on the cytoplasmic side; sequence MPGGKRGLVA…LHYCAFKTTW (217 aa). Residues 12–90 form the PAS domain; that stretch reads QNTFLENIVR…VRQTFDNYES (79 aa). The 53-residue stretch at 91–143 folds into the PAC domain; it reads NCFEVLLYKKNRTPVWFYMQIAPIRNEHEKVVLFLCTFKDITLFKQPIEDDST. Residues 218–238 traverse the membrane as a helical segment; sequence DWVILILTFYTAIMVPYNVSF. The Extracellular segment spans residues 239–243; that stretch reads KTKQN. The helical transmembrane segment at 244–264 threads the bilayer; it reads NIAWLVLDSVVDVIFLVDIVL. At 265–291 the chain is on the cytoplasmic side; it reads NFHTTFVGPGGEVISDPKLIRMNYLKT. A helical transmembrane segment spans residues 292–312; that stretch reads WFVIDLLSCLPYDIINAFENV. Topologically, residues 313 to 319 are extracellular; it reads DEGISSL. Residues 320–340 form a helical; Voltage-sensor membrane-spanning segment; that stretch reads FSSLKVVRLLRLGRVARKLDH. Topologically, residues 341–346 are cytoplasmic; the sequence is YLEYGA. Residues 347–367 traverse the membrane as a helical segment; that stretch reads AVLVLLVCVFGLVAHWLACIW. Residues 368–419 lie on the Extracellular side of the membrane; sequence YSIGDYEVIDEVTNTIQIDSWLYQLALSIGTPYRYNTSAGIWEGGPSKDSLY. An N-linked (GlcNAc...) asparagine glycan is attached at asparagine 403. Residues 420 to 440 constitute an intramembrane region (pore-forming); sequence VSSLYFTMTSLTTIGFGNIAP. Positions 432-437 match the Selectivity filter motif; sequence TIGFGN. Residues 441-446 lie on the Extracellular side of the membrane; that stretch reads TTDVEK. The chain crosses the membrane as a helical span at residues 447-467; that stretch reads MFSVAMMMVGSLLYATIFGNV. Over 468 to 988 the chain is Cytoplasmic; that stretch reads TTIFQQMYAN…PESDKDEIHF (521 aa). Residue 550 to 667 participates in a nucleoside 3',5'-cyclic phosphate binding; that stretch reads AFRLASDGCL…NSFSRNLTLT (118 aa). Positions 704–715 are calmodulin-binding; it reads HPVRKLFQKFKQ. Residues 717–742 are disordered; the sequence is KELRNQGSTQGDPERNQLQVESRSLQ. Polar residues predominate over residues 721–742; the sequence is NQGSTQGDPERNQLQVESRSLQ. Lysine 785 is covalently cross-linked (Glycyl lysine isopeptide (Lys-Gly) (interchain with G-Cter in ubiquitin)). The disordered stretch occupies residues 838-890; that stretch reads GLLSEDPKSSDSENSVTKNPLRKTDSCDSGITKSDLRLDKAGEARSPLEHSPI. Residues 871–885 show a composition bias toward basic and acidic residues; that stretch reads SDLRLDKAGEARSPL. Serine 883 is subject to Phosphoserine. Residues 909–948 form a CAD (involved in subunit assembly) region; it reads TLQEVKHELKEDIQLLSCRMTALEKQVAEILKILSEKSVP. Residues 969-988 are disordered; sequence DIFSVSRPESPESDKDEIHF. Positions 977–988 are enriched in basic and acidic residues; that stretch reads ESPESDKDEIHF.

It belongs to the potassium channel family. H (Eag) (TC 1.A.1.20) subfamily. Kv10.2/KCNH5 sub-subfamily. In terms of assembly, homotetramer. The potassium channel is probably composed of a homo- or heterotetrameric complex of pore-forming alpha subunits that can associate with modulating beta subunits. Heteromultimer with KCNH1/EAG. Detected in brain, skeletal muscle, heart, placenta, lung and liver, and at low levels in kidney.

It localises to the membrane. The enzyme catalyses K(+)(in) = K(+)(out). Its function is as follows. Pore-forming (alpha) subunit of a voltage-gated delayed rectifier potassium channel that mediates outward-rectifying potassium currents which, on depolarization, reaches a steady-state level and do not inactivate. The kinetic is characterized by a slow activation time course and a small voltage dependence of the activation time constants, therefore, starts to open at more negative voltages. The activation kinetics depend on the prepulse potential and external divalent cation concentration. The time course of activation is biphasic with a fast and a slowly activating current component. With negative prepulses, the current activation is delayed and slowed down several fold, whereas more positive prepulses speed up activation, therefore the activation rate depends on holding potential. The chain is Voltage-gated delayed rectifier potassium channel KCNH5 from Homo sapiens (Human).